Consider the following 62-residue polypeptide: Sec-independent protein translocase protein TatA (62 aa).

The chain crosses the membrane as a helical span at residues 1–21 (MFGIGIPELLVIFVLILLVFG).

The protein belongs to the TatA/E family. The Tat system comprises two distinct complexes: a TatABC complex, containing multiple copies of TatA, TatB and TatC subunits, and a separate TatA complex, containing only TatA subunits. Substrates initially bind to the TatABC complex, which probably triggers association of the separate TatA complex to form the active translocon.

The protein resides in the cell inner membrane. Part of the twin-arginine translocation (Tat) system that transports large folded proteins containing a characteristic twin-arginine motif in their signal peptide across membranes. TatA could form the protein-conducting channel of the Tat system. The sequence is that of Sec-independent protein translocase protein TatA from Oleidesulfovibrio alaskensis (strain ATCC BAA-1058 / DSM 17464 / G20) (Desulfovibrio alaskensis).